The following is a 360-amino-acid chain: Peptide chain release factor 1 (360 aa).

Position 234 is an N5-methylglutamine (Gln-234).

The protein belongs to the prokaryotic/mitochondrial release factor family. Post-translationally, methylated by PrmC. Methylation increases the termination efficiency of RF1.

It is found in the cytoplasm. Peptide chain release factor 1 directs the termination of translation in response to the peptide chain termination codons UAG and UAA. This Clostridium botulinum (strain Alaska E43 / Type E3) protein is Peptide chain release factor 1.